We begin with the raw amino-acid sequence, 388 residues long: Acetate kinase (388 aa).

Residue asparagine 7 participates in Mg(2+) binding. Position 14 (lysine 14) interacts with ATP. Substrate is bound at residue arginine 76. Aspartate 133 serves as the catalytic Proton donor/acceptor. Residues histidine 193–glycine 197, aspartate 267–arginine 269, and glycine 315–asparagine 319 each bind ATP. A Mg(2+)-binding site is contributed by glutamate 374.

The protein belongs to the acetokinase family. In terms of assembly, homodimer. Requires Mg(2+) as cofactor. Mn(2+) serves as cofactor.

It localises to the cytoplasm. It carries out the reaction acetate + ATP = acetyl phosphate + ADP. Its pathway is metabolic intermediate biosynthesis; acetyl-CoA biosynthesis; acetyl-CoA from acetate: step 1/2. Its function is as follows. Catalyzes the formation of acetyl phosphate from acetate and ATP. Can also catalyze the reverse reaction. This Micrococcus luteus (strain ATCC 4698 / DSM 20030 / JCM 1464 / CCM 169 / CCUG 5858 / IAM 1056 / NBRC 3333 / NCIMB 9278 / NCTC 2665 / VKM Ac-2230) (Micrococcus lysodeikticus) protein is Acetate kinase.